A 454-amino-acid polypeptide reads, in one-letter code: Phosphoglucosamine mutase (454 aa).

Serine 101 serves as the catalytic Phosphoserine intermediate. Mg(2+) is bound by residues serine 101, aspartate 243, aspartate 245, and aspartate 247. A Phosphoserine modification is found at serine 101.

The protein belongs to the phosphohexose mutase family. Requires Mg(2+) as cofactor. Activated by phosphorylation.

It catalyses the reaction alpha-D-glucosamine 1-phosphate = D-glucosamine 6-phosphate. Functionally, catalyzes the conversion of glucosamine-6-phosphate to glucosamine-1-phosphate. The sequence is that of Phosphoglucosamine mutase from Geotalea uraniireducens (strain Rf4) (Geobacter uraniireducens).